The primary structure comprises 199 residues: dITP/XTP pyrophosphatase (199 aa).

Position 7–12 (7–12 (SNNRGK)) interacts with substrate. Residues Asp39 and Asp68 each contribute to the Mg(2+) site. Catalysis depends on Asp68, which acts as the Proton acceptor. Residues Ala69, 154 to 157 (FGFD), Lys177, and 182 to 183 (HR) contribute to the substrate site.

This sequence belongs to the HAM1 NTPase family. Homodimer. The cofactor is Mg(2+).

The enzyme catalyses XTP + H2O = XMP + diphosphate + H(+). The catalysed reaction is dITP + H2O = dIMP + diphosphate + H(+). It catalyses the reaction ITP + H2O = IMP + diphosphate + H(+). Functionally, pyrophosphatase that catalyzes the hydrolysis of nucleoside triphosphates to their monophosphate derivatives, with a high preference for the non-canonical purine nucleotides XTP (xanthosine triphosphate), dITP (deoxyinosine triphosphate) and ITP. Seems to function as a house-cleaning enzyme that removes non-canonical purine nucleotides from the nucleotide pool, thus preventing their incorporation into DNA/RNA and avoiding chromosomal lesions. The polypeptide is dITP/XTP pyrophosphatase (Paracidovorax citrulli (strain AAC00-1) (Acidovorax citrulli)).